Here is a 145-residue protein sequence, read N- to C-terminus: Putative pre-16S rRNA nuclease (145 aa).

The protein belongs to the YqgF nuclease family.

It is found in the cytoplasm. Could be a nuclease involved in processing of the 5'-end of pre-16S rRNA. The protein is Putative pre-16S rRNA nuclease of Limosilactobacillus fermentum (strain NBRC 3956 / LMG 18251) (Lactobacillus fermentum).